The chain runs to 188 residues: UPF0301 protein Mmwyl1_0539 (188 aa).

The protein belongs to the UPF0301 (AlgH) family.

In Marinomonas sp. (strain MWYL1), this protein is UPF0301 protein Mmwyl1_0539.